A 199-amino-acid chain; its full sequence is Probable V-type proton ATPase 20 kDa proteolipid subunit (199 aa).

At 1–3 the chain is on the vacuolar side; the sequence is MSL. A helical transmembrane segment spans residues 4 to 24; that stretch reads FSTSLWTTTVMSIIVGLYMLF. Residues 25–46 lie on the Cytoplasmic side of the membrane; that stretch reads HNSGESFDFGSFLLDTSPYTWG. The helical transmembrane segment at 47-67 threads the bilayer; it reads LLGIASCVAFGIIGAAWGIFI. Residues 68 to 86 are Vacuolar-facing; it reads CGTSILGGAVKAPRIKTKN. The chain crosses the membrane as a helical span at residues 87–107; that stretch reads LISIIFCEVVAIYSLIIAIVF. The Cytoplasmic portion of the chain corresponds to 108 to 130; it reads SAKINDINPAGFYTKSHYYTGFA. The chain crosses the membrane as a helical span at residues 131 to 151; it reads LFWGGITVGLCNLICGVCVGI. At 152–170 the chain is on the vacuolar side; that stretch reads TGSSAALADAQDASLFVKV. Residues 171–191 form a helical membrane-spanning segment; sequence LVVEIFGSVLGLFGLIVGLLI. Residues 192–199 lie on the Cytoplasmic side of the membrane; it reads GGKASDFS.

Belongs to the V-ATPase proteolipid subunit family. In terms of assembly, V-ATPase is a heteromultimeric enzyme composed of a peripheral catalytic V1 complex (components A to H) attached to an integral membrane V0 proton pore complex (components: a, c, c', c'', d, e, f and VOA1). The decameric c-ring forms the proton-conducting pore, and is composed of eight proteolipid subunits c, one subunit c' and one subunit c''.

It is found in the vacuole membrane. Functionally, proton-conducting pore forming subunit of the V0 complex of vacuolar(H+)-ATPase (V-ATPase), a multisubunit enzyme composed of a peripheral complex (V1) that hydrolyzes ATP and a membrane integral complex (V0) that translocates protons. V-ATPase is responsible for acidifying and maintaining the pH of intracellular compartments. This Schizosaccharomyces pombe (strain 972 / ATCC 24843) (Fission yeast) protein is Probable V-type proton ATPase 20 kDa proteolipid subunit (vma16).